The primary structure comprises 632 residues: PAN2-PAN3 deadenylation complex subunit PAN3 (632 aa).

Disordered stretches follow at residues 1-22 (MQPGEGYHYDSGPNNAVHPHQL) and 99-127 (PTFGPGQHMNHRASHHHQSPQMAQQPPTL). A compositionally biased stretch (basic residues) spans 107–116 (MNHRASHHHQ). Over residues 117–127 (SPQMAQQPPTL) the composition is skewed to polar residues. The pseudokinase domain stretch occupies residues 223–494 (KADSAIIGDI…TINEIMPMIG (272 aa)). Residues Arg-270, 321–328 (DYYPLAGT), and 397–398 (NK) each bind ATP. A coiled-coil region spans residues 495-533 (GRFFTVMENMQAKTDVLEAELSREMENGRLFRLVAKMNT). The segment at 534–632 (VLERVEHGTD…LLGTNMMLHR (99 aa)) is knob domain.

Belongs to the protein kinase superfamily. PAN3 family. In terms of assembly, homodimer. Forms a heterotrimer with a catalytic subunit PAN2 to form the poly(A)-nuclease (PAN) deadenylation complex. Interacts (via PAM-2 motif) with poly(A)-binding protein (via PABC domain), conferring substrate specificity of the enzyme complex. Interacts with the GW182 family protein ain-1. As to expression, highly expressed in germ cells.

Its subcellular location is the cytoplasm. It localises to the P-body. In terms of biological role, regulatory subunit of the poly(A)-nuclease (PAN) deadenylation complex, one of two cytoplasmic mRNA deadenylases involved in general and miRNA-mediated mRNA turnover. PAN specifically shortens poly(A) tails of RNA and the activity is stimulated by poly(A)-binding protein (PABP). PAN deadenylation is followed by rapid degradation of the shortened mRNA tails by the CCR4-NOT complex. Deadenylated mRNAs are then degraded by two alternative mechanisms, namely exosome-mediated 3'-5' exonucleolytic degradation, or deadenylation-dependent mRNA decaping and subsequent 5'-3' exonucleolytic degradation by XRN1. PAN3 acts as a positive regulator for PAN activity, recruiting the catalytic subunit PAN2 to mRNA via its interaction with RNA and PABP, and to miRNA targets via its interaction with GW182 family proteins. Within the PAN complex, may positively regulate fertility. The sequence is that of PAN2-PAN3 deadenylation complex subunit PAN3 from Caenorhabditis elegans.